Reading from the N-terminus, the 873-residue chain is Outer membrane usher protein FimC (873 aa).

Residues 1–15 form the signal peptide; that stretch reads MKQIPLILAMSLAFA. Residues cysteine 815 and cysteine 838 are joined by a disulfide bond.

The protein belongs to the fimbrial export usher family.

The protein resides in the cell outer membrane. Probable porin-like protein necessary for the assembly of a pilin-type protein. This chain is Outer membrane usher protein FimC (fimC), found in Bordetella pertussis (strain Tohama I / ATCC BAA-589 / NCTC 13251).